An 86-amino-acid polypeptide reads, in one-letter code: Small ribosomal subunit protein bS20 (86 aa).

This sequence belongs to the bacterial ribosomal protein bS20 family.

In terms of biological role, binds directly to 16S ribosomal RNA. The chain is Small ribosomal subunit protein bS20 from Paenarthrobacter aurescens (strain TC1).